The chain runs to 435 residues: Citrate synthase (435 aa).

Active-site residues include histidine 311 and aspartate 370.

This sequence belongs to the citrate synthase family.

The catalysed reaction is oxaloacetate + acetyl-CoA + H2O = citrate + CoA + H(+). It participates in carbohydrate metabolism; tricarboxylic acid cycle; isocitrate from oxaloacetate: step 1/2. The polypeptide is Citrate synthase (gltA) (Rickettsia bellii (strain RML369-C)).